Consider the following 480-residue polypeptide: Cysteine--tRNA ligase (480 aa).

C29 provides a ligand contact to Zn(2+). Positions 31-41 (ITVYDYCHLGH) match the 'HIGH' region motif. 3 residues coordinate Zn(2+): C215, H240, and E244. Residues 272–276 (KMSKS) carry the 'KMSKS' region motif. Residue K275 coordinates ATP.

Belongs to the class-I aminoacyl-tRNA synthetase family. In terms of assembly, monomer. Zn(2+) serves as cofactor.

It is found in the cytoplasm. The enzyme catalyses tRNA(Cys) + L-cysteine + ATP = L-cysteinyl-tRNA(Cys) + AMP + diphosphate. In Microcystis aeruginosa (strain NIES-843 / IAM M-2473), this protein is Cysteine--tRNA ligase.